The primary structure comprises 172 residues: Small ribosomal subunit protein uS4 (172 aa).

Positions 104-168 (RRLQTIVYRK…SPLAKMAQGG (65 aa)) constitute an S4 RNA-binding domain.

The protein belongs to the universal ribosomal protein uS4 family. As to quaternary structure, part of the 30S ribosomal subunit. Contacts protein S5. The interaction surface between S4 and S5 is involved in control of translational fidelity.

Its function is as follows. One of the primary rRNA binding proteins, it binds directly to 16S rRNA where it nucleates assembly of the body of the 30S subunit. Functionally, with S5 and S12 plays an important role in translational accuracy. The sequence is that of Small ribosomal subunit protein uS4 from Thermofilum pendens (strain DSM 2475 / Hrk 5).